Consider the following 367-residue polypeptide: Alanine racemase (367 aa).

Lys40 acts as the Proton acceptor; specific for D-alanine in catalysis. N6-(pyridoxal phosphate)lysine is present on Lys40. Arg136 provides a ligand contact to substrate. Residue Tyr263 is the Proton acceptor; specific for L-alanine of the active site. Met310 contributes to the substrate binding site.

It belongs to the alanine racemase family. Requires pyridoxal 5'-phosphate as cofactor.

It catalyses the reaction L-alanine = D-alanine. It functions in the pathway amino-acid biosynthesis; D-alanine biosynthesis; D-alanine from L-alanine: step 1/1. Functionally, catalyzes the interconversion of L-alanine and D-alanine. May also act on other amino acids. In Lactococcus lactis subsp. cremoris (strain SK11), this protein is Alanine racemase (alr).